The primary structure comprises 442 residues: Divalent metal cation transporter MntH (442 aa).

Helical transmembrane passes span 29 to 49, 62 to 82, 106 to 126, 135 to 155, 166 to 186, 209 to 229, 258 to 278, 295 to 315, 347 to 367, 372 to 392, and 413 to 433; these read MLAY…PGNW, TLLT…SLCV, FCLW…ELLG, FVIP…VLLF, ALVI…ILFS, MLYI…LYLH, FALS…AATF, LLSP…ALLA, LITR…FGEN, LIVL…IPLV, and LAWL…LQSL.

The protein belongs to the NRAMP family.

Its subcellular location is the cell inner membrane. H(+)-stimulated, divalent metal cation uptake system. The sequence is that of Divalent metal cation transporter MntH from Nostoc sp. (strain PCC 7120 / SAG 25.82 / UTEX 2576).